The chain runs to 609 residues: Pair-rule protein odd-paired (609 aa).

The tract at residues 20–41 (RMSPNTTASNSNAQQQQQQQLE) is disordered. Polar residues predominate over residues 22–32 (SPNTTASNSNA). The segment at 210 to 249 (MQCLWIDPDQPGLVPPGGRKTCNKVFHSMHEIVTHLTVEH) adopts a C2H2-type 1; atypical zinc-finger fold. C2H2-type zinc fingers lie at residues 258–285 (HACF…IRVH), 291–315 (FACP…KRTH), 321–345 (FKCE…SHVH), and 351–375 (YNCR…MKVH). Disordered stretches follow at residues 373–550 (KVHG…ASAS) and 583–609 (EAMN…ATAY). The segment covering 399–409 (IITGGAQTPPS) has biased composition (polar residues). Composition is skewed to low complexity over residues 414 to 434 (GSAG…IKSS) and 449 to 498 (HLGA…LTAH). The segment covering 528-537 (SHHHHPHHHQ) has biased composition (basic residues). Low complexity predominate over residues 538-550 (AAPSPGAAAASAS). Positions 591-601 (FGHHHHHHHLM) are enriched in basic residues.

This sequence belongs to the GLI C2H2-type zinc-finger protein family. In terms of tissue distribution, expressed throughout all segment primordia; expressed ubiquitously in the ectoderm and mesoderm precursors.

The protein localises to the nucleus. Its function is as follows. Transcription factor essential for parasegmental subdivision of the embryo. It is involved in the activation of wingless (wg) in odd parasegments. It is also required for the timely activation of wg in the remaining parasegments and for the timely activation of engrailed (en) in all parasegments. This Drosophila melanogaster (Fruit fly) protein is Pair-rule protein odd-paired (opa).